The primary structure comprises 62 residues: Small ribosomal subunit protein bS21 (62 aa).

The span at 43–52 (VKKKLKSEAA) shows a compositional bias: basic and acidic residues. The tract at residues 43–62 (VKKKLKSEAARKRKNRRRFK) is disordered. The span at 53 to 62 (RKRKNRRRFK) shows a compositional bias: basic residues.

The protein belongs to the bacterial ribosomal protein bS21 family.

The polypeptide is Small ribosomal subunit protein bS21 (Lactiplantibacillus plantarum (strain ATCC BAA-793 / NCIMB 8826 / WCFS1) (Lactobacillus plantarum)).